Reading from the N-terminus, the 241-residue chain is Terpene cyclase pyr4 (241 aa).

A run of 7 helical transmembrane segments spans residues 20–40, 49–69, 79–99, 113–133, 141–161, 168–188, and 206–226; these read IADW…LAMI, YGMA…YSVI, AVLT…IKFA, LPWI…ALAA, ANWG…CQLM, GASY…GIFL, and FVTW…TFLW.

This sequence belongs to the paxB family.

Its subcellular location is the membrane. It carries out the reaction 2-oxo-3-[(8S)-epoxy-(2E,6E)-farnesyl]-6-(pyridin-3-yl)-2H-pyran-4-olate + H(+) = deacetylpyripyropene E. The protein operates within secondary metabolite biosynthesis; terpenoid biosynthesis. Terpene cyclase; part of the gene cluster that mediates the biosynthesis of pyripyropene A, a specific human acyl-coenzyme A:cholesterol acyltransferase 2 inhibitor. The first step of the pathway is the synthesis of nicotinyl-CoA from nicotinic acid by the nicotinic acid-CoA ligase pyr1. Nicotinyl-CoA is then a substrate of polyketide synthase pyr2 to produce 4-hydroxy-6-(3-pyridinyl)-2H-pyran-2-one (HPPO) which is further prenylated by the polyprenyl transferase pyr6 to yield farnesyl-HPPO. The next steps consist of an epoxidation of farnesyl-HPPO to epoxyfarnesyl-HPPO by FAD-dependent monooxygenase pyr5 and a cyclization of the terpenoid portion by the terpene cyclase pyr4 to yield deacetyl-pyripyropene E. The 2 cytochrome P450 monooxygenases pyr3 and pyr9, and the 2 acetyltransferases pyr7 and pyr8 are involved in the conversion of deacetyl-pyripyropene E into pyripyropene A through several cycles of oxidation and acetylation steps. Pyr7 acetylates deacetyl-pyripyropene E to pyripyropene E which is oxidized to 11-deacetyl-pyripyropene O by pyr3, which is in turn acetylated into pyripyropene O by pyr8. Pyripyropene O is then oxidized to deacetyl-pyripyropene A by pyr9. Deacetyl-pyripyropene A is finally acetylated to pyripyropene A by pyr8. The protein is Terpene cyclase pyr4 of Aspergillus fumigatus (strain ATCC MYA-4609 / CBS 101355 / FGSC A1100 / Af293) (Neosartorya fumigata).